A 476-amino-acid chain; its full sequence is FAD-dependent monooxygenase dpasE (476 aa).

A signal peptide spans 1–21; the sequence is MSQPAFKIIIVGCSVTGLTLA. FAD contacts are provided by glutamate 35, alanine 49, and arginine 109. 2 N-linked (GlcNAc...) asparagine glycosylation sites follow: asparagine 190 and asparagine 219. Aspartate 308 and alanine 321 together coordinate FAD. A helical membrane pass occupies residues 441–461; it reads GAGFWITAFLSLSLLAVAATM.

It belongs to the paxM FAD-dependent monooxygenase family. FAD serves as cofactor.

Its subcellular location is the membrane. It participates in secondary metabolite biosynthesis; terpenoid biosynthesis. In terms of biological role, FAD-dependent monooxygenase; part of the gene cluster that mediates the biosynthesis of the diterpenoid pyrones subglutinols A and B. The first step of the pathway is the synthesis of the alpha-pyrone moiety by the polyketide synthase dpasA via condensation of one acetyl-CoA starter unit with 3 malonyl-CoA units and 2 methylations. The alpha-pyrone is then combined with geranylgeranyl pyrophosphate (GGPP) formed by the GGPP synthase dpasD through the action of the prenyltransferase dpasC to yield a linear alpha-pyrone diterpenoid. Subsequent steps in the diterpenoid pyrone biosynthetic pathway involve the decalin core formation, which is initiated by the epoxidation of the C10-C11 olefin by the FAD-dependent oxidoreductase dpasE, and is followed by a cyclization cascade catalyzed by the terpene cyclase dpasB. The FAD-linked oxidoreductase dpasF is then involved in tetrahydrofuran (THF) ring formation at the C5 unit to complete the formation of subglutinols A and B. DpasF possesses also an additional catalytic ability of multi-step oxidations to generate a new DDP analog with an enone system at the C5 named FDDP A. This chain is FAD-dependent monooxygenase dpasE, found in Apiospora sacchari (Arthrinium sacchari).